A 102-amino-acid polypeptide reads, in one-letter code: Small ribosomal subunit protein uS10m (102 aa).

Belongs to the universal ribosomal protein uS10 family.

Its subcellular location is the mitochondrion. The sequence is that of Small ribosomal subunit protein uS10m (RPS10) from Marchantia polymorpha (Common liverwort).